The following is a 132-amino-acid chain: Fluoride-specific ion channel FluC 3 (132 aa).

4 helical membrane-spanning segments follow: residues isoleucine 4–tryptophan 24, phenylalanine 32–tyrosine 52, isoleucine 66–serine 86, and leucine 95–leucine 115. Glycine 74 and threonine 77 together coordinate Na(+).

The protein belongs to the fluoride channel Fluc/FEX (TC 1.A.43) family.

The protein resides in the cell membrane. The catalysed reaction is fluoride(in) = fluoride(out). Na(+) is not transported, but it plays an essential structural role and its presence is essential for fluoride channel function. In terms of biological role, fluoride-specific ion channel. Important for reducing fluoride concentration in the cell, thus reducing its toxicity. The polypeptide is Fluoride-specific ion channel FluC 3 (Methanosarcina barkeri (strain Fusaro / DSM 804)).